We begin with the raw amino-acid sequence, 346 residues long: GTP-binding RHO-like protein (346 aa).

The segment covering M1–S10 has biased composition (basic residues). Positions M1–E25 are disordered. The span at P16–E25 shows a compositional bias: polar residues. G82–T89 serves as a coordination point for GTP. The short motif at Y104–Y112 is the Effector region element. GTP contacts are provided by residues D130–Q134 and T188–D191. Residues L259–D294 form a disordered region. The residue at position 343 (C343) is a Cysteine methyl ester. The S-geranylgeranyl cysteine moiety is linked to residue C343. Positions V344 to L346 are cleaved as a propeptide — removed in mature form.

The protein belongs to the small GTPase superfamily. Rho family.

Its subcellular location is the cell membrane. This chain is GTP-binding RHO-like protein (CRL1), found in Candida albicans (strain WO-1) (Yeast).